A 155-amino-acid chain; its full sequence is S-ribosylhomocysteine lyase (155 aa).

The Fe cation site is built by His57, His61, and Cys124.

It belongs to the LuxS family. Homodimer. Fe cation is required as a cofactor.

The enzyme catalyses S-(5-deoxy-D-ribos-5-yl)-L-homocysteine = (S)-4,5-dihydroxypentane-2,3-dione + L-homocysteine. Involved in the synthesis of autoinducer 2 (AI-2) which is secreted by bacteria and is used to communicate both the cell density and the metabolic potential of the environment. The regulation of gene expression in response to changes in cell density is called quorum sensing. Catalyzes the transformation of S-ribosylhomocysteine (RHC) to homocysteine (HC) and 4,5-dihydroxy-2,3-pentadione (DPD). This chain is S-ribosylhomocysteine lyase, found in Listeria monocytogenes serotype 4a (strain HCC23).